Here is a 263-residue protein sequence, read N- to C-terminus: 3-methyl-2-oxobutanoate hydroxymethyltransferase (263 aa).

Mg(2+) is bound by residues D45 and D84. 3-methyl-2-oxobutanoate contacts are provided by residues 45–46 (DS), D84, and K112. E114 is a Mg(2+) binding site. The active-site Proton acceptor is E180.

Belongs to the PanB family. As to quaternary structure, homodecamer; pentamer of dimers. It depends on Mg(2+) as a cofactor.

The protein localises to the cytoplasm. It catalyses the reaction 3-methyl-2-oxobutanoate + (6R)-5,10-methylene-5,6,7,8-tetrahydrofolate + H2O = 2-dehydropantoate + (6S)-5,6,7,8-tetrahydrofolate. Its pathway is cofactor biosynthesis; (R)-pantothenate biosynthesis; (R)-pantoate from 3-methyl-2-oxobutanoate: step 1/2. Its function is as follows. Catalyzes the reversible reaction in which hydroxymethyl group from 5,10-methylenetetrahydrofolate is transferred onto alpha-ketoisovalerate to form ketopantoate. The chain is 3-methyl-2-oxobutanoate hydroxymethyltransferase from Salmonella enteritidis PT4 (strain P125109).